We begin with the raw amino-acid sequence, 181 residues long: Small ribosomal subunit protein bS16 (181 aa).

The interval 150-181 is disordered; it reads KKAAEEAAKAAAEAPAEEAAPAEEAATEAAAE. The span at 158-181 shows a compositional bias: low complexity; it reads KAAAEAPAEEAAPAEEAATEAAAE.

The protein belongs to the bacterial ribosomal protein bS16 family.

This is Small ribosomal subunit protein bS16 from Bacteroides fragilis (strain ATCC 25285 / DSM 2151 / CCUG 4856 / JCM 11019 / LMG 10263 / NCTC 9343 / Onslow / VPI 2553 / EN-2).